The sequence spans 248 residues: Ubiquinone/menaquinone biosynthesis C-methyltransferase UbiE (248 aa).

Residues Ser-68 and Asp-92 each contribute to the S-adenosyl-L-methionine site.

It belongs to the class I-like SAM-binding methyltransferase superfamily. MenG/UbiE family.

The catalysed reaction is a 2-demethylmenaquinol + S-adenosyl-L-methionine = a menaquinol + S-adenosyl-L-homocysteine + H(+). It catalyses the reaction a 2-methoxy-6-(all-trans-polyprenyl)benzene-1,4-diol + S-adenosyl-L-methionine = a 5-methoxy-2-methyl-3-(all-trans-polyprenyl)benzene-1,4-diol + S-adenosyl-L-homocysteine + H(+). Its pathway is quinol/quinone metabolism; menaquinone biosynthesis; menaquinol from 1,4-dihydroxy-2-naphthoate: step 2/2. It functions in the pathway cofactor biosynthesis; ubiquinone biosynthesis. Its function is as follows. Methyltransferase required for the conversion of demethylmenaquinol (DMKH2) to menaquinol (MKH2) and the conversion of 2-polyprenyl-6-methoxy-1,4-benzoquinol (DDMQH2) to 2-polyprenyl-3-methyl-6-methoxy-1,4-benzoquinol (DMQH2). This Rickettsia peacockii (strain Rustic) protein is Ubiquinone/menaquinone biosynthesis C-methyltransferase UbiE.